A 154-amino-acid polypeptide reads, in one-letter code: 3-dehydroquinate dehydratase (154 aa).

Catalysis depends on Y22, which acts as the Proton acceptor. Residues N73, H79, and D86 each contribute to the substrate site. H99 functions as the Proton donor in the catalytic mechanism. Substrate contacts are provided by residues 100–101 (LS) and R110.

This sequence belongs to the type-II 3-dehydroquinase family. Homododecamer.

The catalysed reaction is 3-dehydroquinate = 3-dehydroshikimate + H2O. The protein operates within metabolic intermediate biosynthesis; chorismate biosynthesis; chorismate from D-erythrose 4-phosphate and phosphoenolpyruvate: step 3/7. Catalyzes a trans-dehydration via an enolate intermediate. This Carboxydothermus hydrogenoformans (strain ATCC BAA-161 / DSM 6008 / Z-2901) protein is 3-dehydroquinate dehydratase.